We begin with the raw amino-acid sequence, 429 residues long: SH2 domain-containing protein 5 (429 aa).

Residues 302-398 enclose the SH2 domain; the sequence is WAFAGLSRSC…LSMGRLNPTY (97 aa).

As to quaternary structure, interacts with BCR. Highly expressed in brain, particularly in Purkinjie cells in the cerebellum and the cornu ammonis of the hippocampus.

Its subcellular location is the postsynaptic density. Functionally, may be involved in synaptic plasticity regulation through the control of Rac-GTP levels. The sequence is that of SH2 domain-containing protein 5 from Mus musculus (Mouse).